Reading from the N-terminus, the 236-residue chain is SERTA domain-containing protein 1 (236 aa).

One can recognise an SERTA domain in the interval 38 to 85 (PTVASSSLFDLSVVKLHHSLRQSEPDLRHLVLVVNTLRRIQASMEPAP). The interval 190 to 211 (ASEGLKPGPENGPAKEEPPELD) is disordered.

Interacts with the PHD-bromodomain of TIF1, TRIM28/TIF1B and p300/CBP. Interacts with E2F1 and TFDP1; modulates transactivation activity of TFDP1/E2F complexes. Also interacts with CDK4. Polyubiquitinated, which promotes proteasomal degradation. As to expression, detected at in testis, lung and, at lower levels, in muscle, liver, spleen, brain and heart.

Acts at E2F-responsive promoters as coregulator to integrate signals provided by PHD- and/or bromodomain-containing transcription factors. Stimulates E2F1/TFDP1 transcriptional activity. Renders the activity of cyclin D1/CDK4 resistant to the inhibitory effects of CDKN2A/p16INK4A. In Mus musculus (Mouse), this protein is SERTA domain-containing protein 1 (Sertad1).